A 429-amino-acid chain; its full sequence is Adenylosuccinate synthetase (429 aa).

Residues 12-18 (GDEGKGK) and 40-42 (GHT) contribute to the GTP site. The active-site Proton acceptor is the Asp13. Mg(2+) contacts are provided by Asp13 and Gly40. IMP contacts are provided by residues 13–16 (DEGK), 38–41 (NAGH), Thr128, Arg142, Gln223, Thr238, and Arg302. Catalysis depends on His41, which acts as the Proton donor. Residue 298 to 304 (VNTGRPR) coordinates substrate. GTP-binding positions include Arg304, 330-332 (KLD), and 412-414 (GVG).

It belongs to the adenylosuccinate synthetase family. In terms of assembly, homodimer. Mg(2+) is required as a cofactor.

The protein resides in the cytoplasm. It catalyses the reaction IMP + L-aspartate + GTP = N(6)-(1,2-dicarboxyethyl)-AMP + GDP + phosphate + 2 H(+). The protein operates within purine metabolism; AMP biosynthesis via de novo pathway; AMP from IMP: step 1/2. Plays an important role in the de novo pathway of purine nucleotide biosynthesis. Catalyzes the first committed step in the biosynthesis of AMP from IMP. This is Adenylosuccinate synthetase from Pseudarthrobacter chlorophenolicus (strain ATCC 700700 / DSM 12829 / CIP 107037 / JCM 12360 / KCTC 9906 / NCIMB 13794 / A6) (Arthrobacter chlorophenolicus).